A 380-amino-acid polypeptide reads, in one-letter code: Kappa-type opioid receptor (380 aa).

At 1 to 57 the chain is on the extracellular side; sequence MEPPVQIFRGEPGPTCSPSTCLPPNGSGWFPGWAEPDGNGSAGSEDVLLEPAHISPV. N-linked (GlcNAc...) asparagine glycans are attached at residues Asn-25 and Asn-39. A helical membrane pass occupies residues 58–85; that stretch reads ILVIITAVYSVVFVVGLVGNSLVMFVII. At 86 to 95 the chain is on the cytoplasmic side; it reads RYTKMKTATN. The helical transmembrane segment at 96-119 threads the bilayer; the sequence is IYIFNLALADALVTTTMPFQSTVY. At 120 to 132 the chain is on the extracellular side; the sequence is LMNSWPFGDVLCK. A disulfide bridge connects residues Cys-131 and Cys-210. The helical transmembrane segment at 133–154 threads the bilayer; that stretch reads VVISIDYYNMFTSIFTLTMMSV. Over 155–173 the chain is Cytoplasmic; sequence DRYIAVCHPVKALDFRTPL. The chain crosses the membrane as a helical span at residues 174 to 196; the sequence is KAKIINICIWILSSSVGISAIVL. Residues 197–222 lie on the Extracellular side of the membrane; sequence GGTKVREDMEVIECSLQFPDDDYSWW. Residues 223–247 form a helical membrane-spanning segment; it reads DLFMKVCVFVFAFVIPVLIIIVCYT. The Cytoplasmic portion of the chain corresponds to 248–274; the sequence is LMILRLKSVRLLSGSREKDRNLRRITR. Residues 275–296 form a helical membrane-spanning segment; it reads LVLVVVAVFVVCWTPIHIFILV. The Extracellular portion of the chain corresponds to 297–311; it reads EALGSTAHSTAALSS. A helical membrane pass occupies residues 312 to 333; that stretch reads YYFCIALGYTNSSLNPILYAFL. Residues 334–380 are Cytoplasmic-facing; that stretch reads DENFKRCFRDFCFPIKMRMERQSTSRVRNTVQDPAYVREVDGVNKPV. The S-palmitoyl cysteine moiety is linked to residue Cys-345.

Belongs to the G-protein coupled receptor 1 family. Interacts with NHERF1. Interacts with GABARAPL1.

Its subcellular location is the cell membrane. In terms of biological role, G-protein coupled opioid receptor that functions as a receptor for endogenous alpha-neoendorphins and dynorphins, but has low affinity for beta-endorphins. Also functions as a receptor for various synthetic opioids and for the psychoactive diterpene salvinorin A. Ligand binding causes a conformation change that triggers signaling via guanine nucleotide-binding proteins (G proteins) and modulates the activity of down-stream effectors, such as adenylate cyclase. Signaling leads to the inhibition of adenylate cyclase activity. Inhibits neurotransmitter release by reducing calcium ion currents and increasing potassium ion conductance. Plays a role in the perception of pain. Plays a role in mediating reduced physical activity upon treatment with synthetic opioids. Plays a role in the regulation of salivation in response to synthetic opioids. May play a role in arousal and regulation of autonomic and neuroendocrine functions. This Bos taurus (Bovine) protein is Kappa-type opioid receptor (OPRK1).